Here is a 94-residue protein sequence, read N- to C-terminus: Integration host factor subunit beta (94 aa).

Belongs to the bacterial histone-like protein family. Heterodimer of an alpha and a beta chain.

Its function is as follows. This protein is one of the two subunits of integration host factor, a specific DNA-binding protein that functions in genetic recombination as well as in transcriptional and translational control. This is Integration host factor subunit beta from Brucella abortus (strain S19).